Here is a 334-residue protein sequence, read N- to C-terminus: Procathepsin L (334 aa).

A signal peptide spans 1-17 (MTPLLLLAVLCLGTALA). A propeptide spans 18-113 (TPKFDQTFNA…RLFQEPLMLQ (96 aa)) (activation peptide). Position 122 (Glu122) interacts with Zn(2+). Disulfide bonds link Cys135/Cys178 and Cys169/Cys211. The active site involves Cys138. Positions 163, 184, 199, 205, 227, 250, 253, 273, and 275 each coordinate Zn(2+). A disulfide bridge links Cys269 with Cys322. His276 is an active-site residue. Residues 289 to 290 (DS) constitute a propeptide that is removed on maturation. The active site involves Asn300.

This sequence belongs to the peptidase C1 family. In terms of assembly, dimer of a heavy and a light chain linked by disulfide bonds. Interacts with Long isoform of CD74/Ii chain; the interaction stabilizes the conformation of mature CTSL. In terms of processing, during export along the endocytic pathway, pro-CTSL undergoes several proteolytic cleavages to generate the CTSL single-chain and two-chain mature forms, composed of a heavy chain linked to a light chain by disulfide bonds. Autocleavage; produces the single-chain CTSL after cleavage of the propeptide. The cleavage can be intermolecular. Both mature cathepsin L1 and procathepsin L are found in the upper epidermis. The lower epidermis predominantly contains procathepsin L. In seminiferous tubules expression is greater at stages VI-VII than at stages IX-XII.

It is found in the lysosome. It localises to the apical cell membrane. The protein resides in the cytoplasmic vesicle. The protein localises to the secretory vesicle. Its subcellular location is the chromaffin granule. It is found in the secreted. It localises to the extracellular space. The enzyme catalyses Specificity close to that of papain. As compared to cathepsin B, cathepsin L exhibits higher activity toward protein substrates, but has little activity on Z-Arg-Arg-NHMec, and no peptidyl-dipeptidase activity.. With respect to regulation, inhibited by the propeptide produced by autocleavage. Long isoform of CD74/Ii chain stabilizes the conformation of mature CTSL by binding to its active site and serving as a chaperone to help maintain a pool of mature enzyme in endocytic compartments and extracellular space of APCs. IFNG enhances the conversion into the CTSL mature and active form. Inhibited by CST6. Inhibited by the glycopeptide antibiotic teicoplanin. Inhibited by amantadine. Its function is as follows. Thiol protease important for the overall degradation of proteins in lysosomes. Plays a critical for normal cellular functions such as general protein turnover, antigen processing and bone remodeling. Involved in the solubilization of cross-linked TG/thyroglobulin and in the subsequent release of thyroid hormone thyroxine (T4) by limited proteolysis of TG/thyroglobulin in the thyroid follicle lumen. In neuroendocrine chromaffin cells secretory vesicles, catalyzes the prohormone proenkephalin processing to the active enkephalin peptide neurotransmitter. In thymus, regulates CD4(+) T cell positive selection by generating the major histocompatibility complex class II (MHCII) bound peptide ligands presented by cortical thymic epithelial cells. Also mediates invariant chain processing in cortical thymic epithelial cells. Major elastin-degrading enzyme at neutral pH. Accumulates as a mature and active enzyme in the extracellular space of antigen presenting cells (APCs) to regulate degradation of the extracellular matrix in the course of inflammation. Secreted form generates endostatin from COL18A1. Critical for cardiac morphology and function. Plays an important role in hair follicle morphogenesis and cycling, as well as epidermal differentiation. Required for maximal stimulation of steroidogenesis by TIMP1. This chain is Procathepsin L, found in Rattus norvegicus (Rat).